The following is a 178-amino-acid chain: Leukemia NUP98 fusion partner 1 (178 aa).

Disordered regions lie at residues 28-55 (EDQRGLRERHRLQATSHRKTSLPCPLPV), 89-108 (SEDGSFKEPLESKGRSHSKI), and 147-178 (IKSRKKVEEERSSRKEEHGEAHMAPLFEKGPE). The segment covering 34 to 47 (RERHRLQATSHRKT) has biased composition (basic residues). The span at 147–167 (IKSRKKVEEERSSRKEEHGEA) shows a compositional bias: basic and acidic residues.

In Homo sapiens (Human), this protein is Leukemia NUP98 fusion partner 1 (LNP1).